A 407-amino-acid chain; its full sequence is Serine hydroxymethyltransferase (407 aa).

Pyridoxal 5'-phosphate contacts are provided by residues Tyr51 and 94-95 (GS). (6S)-5,6,7,8-tetrahydrofolate is bound by residues Leu117 and 121–123 (GHL). Ser172, His200, and His225 together coordinate pyridoxal 5'-phosphate. N6-(pyridoxal phosphate)lysine is present on Lys226. Residue Glu242 participates in (6S)-5,6,7,8-tetrahydrofolate binding. Gly258 is a pyridoxal 5'-phosphate binding site.

The protein belongs to the SHMT family. As to quaternary structure, homodimer. Requires pyridoxal 5'-phosphate as cofactor.

Its subcellular location is the cytoplasm. It catalyses the reaction (6R)-5,10-methylene-5,6,7,8-tetrahydrofolate + glycine + H2O = (6S)-5,6,7,8-tetrahydrofolate + L-serine. Its pathway is one-carbon metabolism; tetrahydrofolate interconversion. It participates in amino-acid biosynthesis; glycine biosynthesis; glycine from L-serine: step 1/1. Its function is as follows. Catalyzes the reversible interconversion of serine and glycine with tetrahydrofolate (THF) serving as the one-carbon carrier. This reaction serves as the major source of one-carbon groups required for the biosynthesis of purines, thymidylate, methionine, and other important biomolecules. Also exhibits THF-independent aldolase activity toward beta-hydroxyamino acids, producing glycine and aldehydes, via a retro-aldol mechanism. This is Serine hydroxymethyltransferase from Thermus thermophilus (strain ATCC 27634 / DSM 579 / HB8).